A 622-amino-acid polypeptide reads, in one-letter code: Cytochrome c oxidase subunit 1 (622 aa).

At 1–27 (MLNALTEKRTRGSMLWDYLTTVDHKKI) the chain is on the extracellular side. A helical membrane pass occupies residues 28-46 (AILYLVAGGFFFLVGGIEA). The Cytoplasmic portion of the chain corresponds to 47 to 68 (MFIRIQLAKPENAFLSAQAYNE). A helical membrane pass occupies residues 69–88 (VMTMHGTTMIFLAAMPLLFA). Fe(II)-heme a is bound at residue His-73. At 89–110 (LMNAVVPLQIGARDVSFPFLNA) the chain is on the extracellular side. A helical membrane pass occupies residues 111-128 (LGFWLFFFGGIFLNLSWF). Topologically, residues 129-159 (LGGAPDAGWTSYASLSLHSKGHGIDFFVLGL) are cytoplasmic. The helical transmembrane segment at 160–178 (QISGLGTLIAGINFLATII) threads the bilayer. Over 179-196 (NMRAPGMTYMRLPLFTWT) the chain is Extracellular. The chain crosses the membrane as a helical span at residues 197-215 (TFVASALILFAFPPLTVGL). Topologically, residues 216-241 (ALMMLDRLFGTNFFNPELGGNTVIWE) are cytoplasmic. Residues 242 to 261 (HLFWIFGHPEVYILILPAFG) traverse the membrane as a helical segment. Cu cation-binding residues include His-249 and Tyr-253. Residues 249–253 (HPEVY) constitute a cross-link (1'-histidyl-3'-tyrosine (His-Tyr)). At 262 to 284 (IFSEVIPVFARKRLFGYSSMVFA) the chain is on the extracellular side. The helical transmembrane segment at 285-304 (IVLIGFLGFMVWVHHMFTTG) threads the bilayer. 2 residues coordinate Cu cation: His-298 and His-299. Topologically, residues 305 to 312 (LGPIANAI) are cytoplasmic. A helical transmembrane segment spans residues 313 to 331 (FAVATMAIAIPTGIKIFNW). At 332–346 (LLTIWGGNVKYTTAM) the chain is on the extracellular side. Residues 347 to 366 (LYAVSFIPSFVLGGVTGVML) form a helical membrane-spanning segment. Residues 367–374 (AAAAADYQ) are Cytoplasmic-facing. Residues 375 to 394 (FHDTYFVVAHFHYVIIGGVV) traverse the membrane as a helical segment. His-384 contacts heme a3. His-386 serves as a coordination point for Fe(II)-heme a. Topologically, residues 395-421 (FGLLAGVHFWWPKMFGKILHETMGKIS) are extracellular. Residues 422–441 (FVLFFIGFHLTFFIQHFVGL) traverse the membrane as a helical segment. Residues 442–459 (MGMPRRVYTFLPGQGLET) are Cytoplasmic-facing. The chain crosses the membrane as a helical span at residues 460-479 (GNLISTIGAFFMAAAVILLL). Residues 480–552 (VNVIWTSVKG…EPVDDIHMPN (73 aa)) lie on the Extracellular side of the membrane. Residues 553-572 (GSILPLIISFGLFVAAFGLL) form a helical membrane-spanning segment. The Cytoplasmic segment spans residues 573–580 (YRSDYAWG). The helical transmembrane segment at 581–604 (LPVIFIGLGITFITMLLRSVIDDH) threads the bilayer. The Cytoplasmic segment spans residues 605 to 622 (GYHIHKEELPNDDKGVKA).

This sequence belongs to the heme-copper respiratory oxidase family. Cu(2+) is required as a cofactor. It depends on heme as a cofactor.

Its subcellular location is the cell membrane. It carries out the reaction 4 Fe(II)-[cytochrome c] + O2 + 8 H(+)(in) = 4 Fe(III)-[cytochrome c] + 2 H2O + 4 H(+)(out). It functions in the pathway energy metabolism; oxidative phosphorylation. In terms of biological role, cytochrome c oxidase is the component of the respiratory chain that catalyzes the reduction of oxygen to water. Subunits 1-3 form the functional core of the enzyme complex. Co I is the catalytic subunit of the enzyme. Electrons originating in cytochrome c are transferred via the copper A center of subunit 2 and heme a of subunit 1 to the bimetallic center formed by heme a3 and copper B. This cytochrome c oxidase shows proton pump activity across the membrane in addition to the electron transfer. This Bacillus subtilis (strain 168) protein is Cytochrome c oxidase subunit 1 (ctaD).